A 359-amino-acid polypeptide reads, in one-letter code: ATP-dependent kinase YFH7 (359 aa).

31 to 39 is an ATP binding site; that stretch reads GPPGSGKST.

The protein belongs to the YFH7 family.

Its function is as follows. ATP-dependent kinase that could be involved in endoplasmic reticulum membrane assembly. This chain is ATP-dependent kinase YFH7 (YFH7), found in Vanderwaltozyma polyspora (strain ATCC 22028 / DSM 70294 / BCRC 21397 / CBS 2163 / NBRC 10782 / NRRL Y-8283 / UCD 57-17) (Kluyveromyces polysporus).